A 500-amino-acid polypeptide reads, in one-letter code: Probable malate:quinone oxidoreductase (500 aa).

This sequence belongs to the MQO family. Requires FAD as cofactor.

It carries out the reaction (S)-malate + a quinone = a quinol + oxaloacetate. It participates in carbohydrate metabolism; tricarboxylic acid cycle; oxaloacetate from (S)-malate (quinone route): step 1/1. In Bacillus cereus (strain AH187), this protein is Probable malate:quinone oxidoreductase.